The following is a 335-amino-acid chain: Glucokinase (335 aa).

11–16 (ADIGGT) provides a ligand contact to ATP.

Belongs to the bacterial glucokinase family.

The protein resides in the cytoplasm. The enzyme catalyses D-glucose + ATP = D-glucose 6-phosphate + ADP + H(+). The protein is Glucokinase of Xanthomonas campestris pv. campestris (strain 8004).